Reading from the N-terminus, the 231-residue chain is MRAFSNVSRISRVSRVSRVALAAPARTVPLMNRNAMSMMRFYSEDAKASEKAGEKAEEKAEEQNLSAEEQKLKDLQEQLDKKTKEAAELKDRLLRSVADFRNLQEVTKKDVEKAKSYALQKFAKDLLESVDNFGHALGAFKEEDLEKSKEISDLYTGVKMTRDVFEKTLKKYGIEKLDPLGERFDPNKHEATFELAQPDKEPGTVFHVQQLGYTLNERVIRPAKVGVVKED.

Residues 49–71 (SEKAGEKAEEKAEEQNLSAEEQK) are disordered.

The protein belongs to the GrpE family. As to quaternary structure, component of the PAM complex, at least composed of mtHsp70, MGE1, TIM44, PAM16, PAM17 and PAM18.

The protein resides in the mitochondrion matrix. Essential component of the PAM complex, a complex required for the translocation of transit peptide-containing proteins from the inner membrane into the mitochondrial matrix in an ATP-dependent manner. Seems to control the nucleotide-dependent binding of SSC1 to substrate proteins. The polypeptide is GrpE protein homolog, mitochondrial (mge1) (Candida glabrata (strain ATCC 2001 / BCRC 20586 / JCM 3761 / NBRC 0622 / NRRL Y-65 / CBS 138) (Yeast)).